Here is a 112-residue protein sequence, read N- to C-terminus: Protein FAM32A (112 aa).

The disordered stretch occupies residues 23–56 (TKRKKKKKDKDKAKMLEAMGTSKKSEEEKRRCLD). The span at 45–56 (KKSEEEKRRCLD) shows a compositional bias: basic and acidic residues.

Belongs to the FAM32 family. In terms of tissue distribution, widely expressed, with highest level in pancreas and lowest in muscle.

The protein localises to the nucleus. Functionally, may induce G2 arrest and apoptosis. May also increase cell sensitivity to apoptotic stimuli. In cell lines, may play a role in the inhibition of anchor-independent cell growth. This is Protein FAM32A (Fam32a) from Mus musculus (Mouse).